The chain runs to 321 residues: LIMR family protein SELMODRAFT_432210 (321 aa).

The next 5 helical transmembrane spans lie at K28–F48, C116–W133, L139–V159, L240–F260, and L284–G304.

The protein belongs to the LIMR family.

It localises to the membrane. This chain is LIMR family protein SELMODRAFT_432210, found in Selaginella moellendorffii (Spikemoss).